We begin with the raw amino-acid sequence, 487 residues long: NADH-quinone oxidoreductase subunit N (487 aa).

13 helical membrane-spanning segments follow: residues 7 to 27 (LTLI…ILIT), 37 to 57 (LVSI…APAL), 81 to 101 (FAKI…PAFF), 112 to 132 (PVLV…GDLI), 166 to 186 (FVLG…VYGF), 207 to 227 (ALFG…AVPF), 237 to 257 (GAPT…AVAL), 276 to 296 (IVIF…IGQT), 307 to 327 (INNV…GLSA), 329 to 349 (LTYL…LLML), 373 to 393 (LAWC…LLGF), 407 to 427 (DMVL…FYYI), and 452 to 472 (VLLI…TGWL).

It belongs to the complex I subunit 2 family. In terms of assembly, NDH-1 is composed of 14 different subunits. Subunits NuoA, H, J, K, L, M, N constitute the membrane sector of the complex.

Its subcellular location is the cell inner membrane. It catalyses the reaction a quinone + NADH + 5 H(+)(in) = a quinol + NAD(+) + 4 H(+)(out). NDH-1 shuttles electrons from NADH, via FMN and iron-sulfur (Fe-S) centers, to quinones in the respiratory chain. The immediate electron acceptor for the enzyme in this species is believed to be ubiquinone. Couples the redox reaction to proton translocation (for every two electrons transferred, four hydrogen ions are translocated across the cytoplasmic membrane), and thus conserves the redox energy in a proton gradient. This chain is NADH-quinone oxidoreductase subunit N, found in Erythrobacter litoralis (strain HTCC2594).